The primary structure comprises 388 residues: Chorismate synthase (388 aa).

Residues arginine 39 and arginine 45 each contribute to the NADP(+) site. Residues 130–132 (RSS), 251–252 (NA), glycine 296, 311–315 (KPIPT), and arginine 337 each bind FMN.

It belongs to the chorismate synthase family. In terms of assembly, homotetramer. It depends on FMNH2 as a cofactor.

The enzyme catalyses 5-O-(1-carboxyvinyl)-3-phosphoshikimate = chorismate + phosphate. It participates in metabolic intermediate biosynthesis; chorismate biosynthesis; chorismate from D-erythrose 4-phosphate and phosphoenolpyruvate: step 7/7. Catalyzes the anti-1,4-elimination of the C-3 phosphate and the C-6 proR hydrogen from 5-enolpyruvylshikimate-3-phosphate (EPSP) to yield chorismate, which is the branch point compound that serves as the starting substrate for the three terminal pathways of aromatic amino acid biosynthesis. This reaction introduces a second double bond into the aromatic ring system. This is Chorismate synthase from Streptococcus pneumoniae serotype 19F (strain G54).